A 2194-amino-acid polypeptide reads, in one-letter code: Nucleosome-remodeling factor subunit NURF301-like (2194 aa).

Residues 1–12 (MAPPRGRSKRKH) show a composition bias toward basic residues. The segment at 1–137 (MAPPRGRSKR…EEEESSDDEF (137 aa)) is disordered. Positions 60 to 79 (AQRETPSDAEEVEVKIEEIS) are enriched in basic and acidic residues. Residues 80-93 (VRSTPASTPAPKST) show a composition bias toward polar residues. Positions 94 to 112 (SKARGRPKKNPTPPRRKSL) are enriched in basic residues. Over residues 118–137 (DIIYMDEDSEEEEESSDDEF) the composition is skewed to acidic residues. 2 DDT domains span residues 196–256 (TASI…SDDE) and 341–396 (VGKF…SAVR). The segment at 347–392 (DENCRVCGKSSGRVVGCTQCEAAFHVECSHLKPFPEVLVCNICKKN) adopts a PHD-type 1 zinc-finger fold. Disordered stretches follow at residues 1091 to 1122 (ESWL…SLDN), 1158 to 1255 (AKRK…PQPN), 1413 to 1433 (TSNF…PVYS), 1657 to 1701 (MRQE…SNDS), and 1834 to 1888 (ESIA…HTPG). The stretch at 1151 to 1187 (RAEAEKTAKRKLEATRKAQKAKEDEERRRIQQQQQRS) forms a coiled coil. Over residues 1158–1179 (AKRKLEATRKAQKAKEDEERRR) the composition is skewed to basic and acidic residues. Residues 1665-1684 (TSGYDSSGNPIRSITSSGDT) show a composition bias toward polar residues. Residues 1852-1861 (KSEDDRDKPE) show a composition bias toward basic and acidic residues. 2 consecutive DDT domains span residues 1883-1953 (AFHT…EQER) and 1948-2014 (IEEQ…AEGY). 2 consecutive PHD-type zinc fingers follow at residues 1899–1950 (IEHC…CIEE) and 1959–2010 (ALYC…CTRE). The 105-residue stretch at 2030 to 2134 (QLTRADYTHV…EVFDKKLIDV (105 aa)) folds into the Bromo domain.

The protein belongs to the BPTF family. Part of a nucleosome remodeling factor-like (NURF-like) complex containing nurf-1 and isw-1.

The protein localises to the nucleus. Functionally, histone-binding component of a NURF-like (nucleosome remodeling factor-like) complex, which would catalyze ATP-dependent nucleosome sliding and facilitate transcription of chromatin. Involved in vulval cell fates. This chain is Nucleosome-remodeling factor subunit NURF301-like (nurf-1), found in Caenorhabditis elegans.